Reading from the N-terminus, the 433-residue chain is 3-phosphoshikimate 1-carboxyvinyltransferase (433 aa).

The 3-phosphoshikimate site is built by Lys-23, Ser-24, and Arg-28. Residue Lys-23 participates in phosphoenolpyruvate binding. The phosphoenolpyruvate site is built by Gly-95 and Arg-123. The 3-phosphoshikimate site is built by Ser-170, Ser-171, Gln-172, Ser-198, Asp-317, and Lys-344. Gln-172 provides a ligand contact to phosphoenolpyruvate. Residue Asp-317 is the Proton acceptor of the active site. Residues Arg-348, Arg-391, and Lys-416 each coordinate phosphoenolpyruvate.

It belongs to the EPSP synthase family. As to quaternary structure, monomer.

The protein localises to the cytoplasm. The catalysed reaction is 3-phosphoshikimate + phosphoenolpyruvate = 5-O-(1-carboxyvinyl)-3-phosphoshikimate + phosphate. It participates in metabolic intermediate biosynthesis; chorismate biosynthesis; chorismate from D-erythrose 4-phosphate and phosphoenolpyruvate: step 6/7. Its function is as follows. Catalyzes the transfer of the enolpyruvyl moiety of phosphoenolpyruvate (PEP) to the 5-hydroxyl of shikimate-3-phosphate (S3P) to produce enolpyruvyl shikimate-3-phosphate and inorganic phosphate. The protein is 3-phosphoshikimate 1-carboxyvinyltransferase of Neisseria meningitidis serogroup C / serotype 2a (strain ATCC 700532 / DSM 15464 / FAM18).